Consider the following 242-residue polypeptide: EF-hand domain-containing protein D2 (242 aa).

Residues M1–A53 are disordered. Residue A2 is modified to N-acetylalanine. Position 11 is a phosphoserine (S11). Low complexity predominate over residues G32–A42. A phosphoserine mark is found at S76 and S78. Y85 carries the post-translational modification Phosphotyrosine. 2 EF-hand domains span residues K94–P129 and Q130–G165. 8 residues coordinate Ca(2+): D107, D111, E118, D143, D145, D147, K149, and E154. N6-acetyllysine is present on K235.

As to quaternary structure, interacts with CASP9; with inactive form.

The protein localises to the membrane raft. May regulate B-cell receptor (BCR)-induced immature and primary B-cell apoptosis. Plays a role as negative regulator of the canonical NF-kappa-B-activating branch. Controls spontaneous apoptosis through the regulation of BCL2L1 abundance. The chain is EF-hand domain-containing protein D2 (EFHD2) from Bos taurus (Bovine).